Here is a 908-residue protein sequence, read N- to C-terminus: Protein translocase subunit SecA (908 aa).

Residues Gln90, 108–112 (GEGKT), and Asp503 each bind ATP. The span at 846–864 (AAAAEAPVAPAPQPAAAAP) shows a compositional bias: low complexity. Residues 846 to 884 (AAAAEAPVAPAPQPAAAAPQPTPELVGAEAGEPDPAAWG) are disordered. The Zn(2+) site is built by Cys892, Cys894, Cys903, and His904.

The protein belongs to the SecA family. Monomer and homodimer. Part of the essential Sec protein translocation apparatus which comprises SecA, SecYEG and auxiliary proteins SecDF-YajC and YidC. It depends on Zn(2+) as a cofactor.

It is found in the cell inner membrane. It localises to the cytoplasm. The enzyme catalyses ATP + H2O + cellular proteinSide 1 = ADP + phosphate + cellular proteinSide 2.. Functionally, part of the Sec protein translocase complex. Interacts with the SecYEG preprotein conducting channel. Has a central role in coupling the hydrolysis of ATP to the transfer of proteins into and across the cell membrane, serving both as a receptor for the preprotein-SecB complex and as an ATP-driven molecular motor driving the stepwise translocation of polypeptide chains across the membrane. The polypeptide is Protein translocase subunit SecA (Cereibacter sphaeroides (strain KD131 / KCTC 12085) (Rhodobacter sphaeroides)).